A 284-amino-acid chain; its full sequence is 4-hydroxy-3-methylbut-2-enyl diphosphate reductase (284 aa).

Cys-12 is a binding site for [4Fe-4S] cluster. (2E)-4-hydroxy-3-methylbut-2-enyl diphosphate-binding residues include His-40 and His-72. Dimethylallyl diphosphate-binding residues include His-40 and His-72. 2 residues coordinate isopentenyl diphosphate: His-40 and His-72. A [4Fe-4S] cluster-binding site is contributed by Cys-94. A (2E)-4-hydroxy-3-methylbut-2-enyl diphosphate-binding site is contributed by His-122. Residue His-122 participates in dimethylallyl diphosphate binding. Isopentenyl diphosphate is bound at residue His-122. The active-site Proton donor is the Glu-124. Thr-161 lines the (2E)-4-hydroxy-3-methylbut-2-enyl diphosphate pocket. Cys-193 contacts [4Fe-4S] cluster. The (2E)-4-hydroxy-3-methylbut-2-enyl diphosphate site is built by Ser-221, Asn-223, and Ser-264. Residues Ser-221, Asn-223, and Ser-264 each coordinate dimethylallyl diphosphate. 3 residues coordinate isopentenyl diphosphate: Ser-221, Asn-223, and Ser-264.

It belongs to the IspH family. [4Fe-4S] cluster is required as a cofactor.

The catalysed reaction is isopentenyl diphosphate + 2 oxidized [2Fe-2S]-[ferredoxin] + H2O = (2E)-4-hydroxy-3-methylbut-2-enyl diphosphate + 2 reduced [2Fe-2S]-[ferredoxin] + 2 H(+). It catalyses the reaction dimethylallyl diphosphate + 2 oxidized [2Fe-2S]-[ferredoxin] + H2O = (2E)-4-hydroxy-3-methylbut-2-enyl diphosphate + 2 reduced [2Fe-2S]-[ferredoxin] + 2 H(+). Its pathway is isoprenoid biosynthesis; dimethylallyl diphosphate biosynthesis; dimethylallyl diphosphate from (2E)-4-hydroxy-3-methylbutenyl diphosphate: step 1/1. It functions in the pathway isoprenoid biosynthesis; isopentenyl diphosphate biosynthesis via DXP pathway; isopentenyl diphosphate from 1-deoxy-D-xylulose 5-phosphate: step 6/6. Functionally, catalyzes the conversion of 1-hydroxy-2-methyl-2-(E)-butenyl 4-diphosphate (HMBPP) into a mixture of isopentenyl diphosphate (IPP) and dimethylallyl diphosphate (DMAPP). Acts in the terminal step of the DOXP/MEP pathway for isoprenoid precursor biosynthesis. In Dehalococcoides mccartyi (strain ATCC BAA-2100 / JCM 16839 / KCTC 5957 / BAV1), this protein is 4-hydroxy-3-methylbut-2-enyl diphosphate reductase.